The following is a 442-amino-acid chain: Zuotin (442 aa).

The tract at residues 49–84 is disordered; it reads RQRHGRTFSEDERLEVKNKVQEEVKEESEDEEEDPA. Phosphothreonine is present on T55. Basic and acidic residues predominate over residues 55–71; that stretch reads TFSEDERLEVKNKVQEE. A phosphoserine mark is found at S57 and S76. A compositionally biased stretch (acidic residues) spans 72–83; it reads VKEESEDEEEDP. Positions 97-167 constitute a J domain; the sequence is DHYAVLGLSK…VRRRQFDSVD (71 aa). Disordered regions lie at residues 242 to 270 and 306 to 331; these read DGESRDNKRFQEKKNRSERQKNKARDNAR and GAREAAAAAQKKKEEEERRAAEEAAA. The span at 316–330 shows a compositional bias: basic and acidic residues; sequence KKKEEEERRAAEEAA.

As to quaternary structure, RAC is a heterodimer of the Hsp70/DnaK-type chaperone ssz1 and the Hsp40/DnaJ-type chaperone zuo1. RAC associates with ribosomes via zuo1.

The protein localises to the cytoplasm. In terms of biological role, component of the ribosome-associated complex (RAC), a heterodimeric chaperone complex involved in regulation of accurate translation termination and in folding or maintaining nascent polypeptides in a folding-competent state. RAC stimulates the ATPase activity of the ribosome-associated pool of Hsp70-type chaperones SSB1/SSB2 that bind to the nascent polypeptide chain. This Schizosaccharomyces pombe (strain 972 / ATCC 24843) (Fission yeast) protein is Zuotin (zuo1).